Here is a 477-residue protein sequence, read N- to C-terminus: Polyketide synthase-related protein Dhc1 (477 aa).

The Carrier domain occupies 34-112 (EKMTVREGEL…AMTHCVFDRA (79 aa)). At S72 the chain carries O-(pantetheine 4'-phosphoryl)serine. Residues 161–322 (LTGATSFLGS…AGEVFLENLV (162 aa)) are ketoreductase (KR) domain. The segment at 410–435 (VQQQQQQQQRQSQPPRDDAADGSPTE) is disordered. Over residues 411–422 (QQQQQQQQRQSQ) the composition is skewed to low complexity. The segment covering 424–435 (PRDDAADGSPTE) has biased composition (basic and acidic residues).

Its pathway is mycotoxin biosynthesis. Its function is as follows. Polyketide synthase-related protein; part of the gene cluster that mediates the biosynthesis of 10,11-dehydrocurvularin, a prevalent fungal phytotoxin with heat shock response and immune-modulatory activities. The highly reducing polyketide synthase Dhc3 is responsible for biosynthesis up to the tetraketide stage. The non-reducing polyketide synthase Dhc5 then conducts four additional chain extension cycles, producing the unreduced part of the nascent octaketide from C-1 to C-8 in 10,11-dehydrocurvularin. The role of Dhc1 in 10,11-dehydrocurvularin biosynthesis has not been identified yet. In Alternaria cinerariae, this protein is Polyketide synthase-related protein Dhc1.